Consider the following 460-residue polypeptide: Muscarinic acetylcholine receptor M1 (460 aa).

The Extracellular portion of the chain corresponds to 1-22 (MNTSAPPAVSPNITVLAPGKGP). 2 N-linked (GlcNAc...) asparagine glycosylation sites follow: asparagine 2 and asparagine 12. Residues 23-48 (WQVAFIGITTGLLSLATVTGNLLVLI) form a helical membrane-spanning segment. Over 49–62 (SFKVNTELKTVNNY) the chain is Cytoplasmic. A helical membrane pass occupies residues 63 to 84 (FLLSLACADLIIGTFSMNLYTT). At 85 to 95 (YLLMGHWALGT) the chain is on the extracellular side. The chain crosses the membrane as a helical span at residues 96-121 (LACDLWLALDYVASNASVMNLLLISF). A disulfide bond links cysteine 98 and cysteine 178. At 122–142 (DRYFSVTRPLSYRAKRTPRRA) the chain is on the cytoplasmic side. Residues 143-164 (ALMIGLAWLVSFVLWAPAILFW) form a helical membrane-spanning segment. Residues 165–185 (QYLVGERTVLAGQCYIQFLSQ) lie on the Extracellular side of the membrane. The chain crosses the membrane as a helical span at residues 186–209 (PIITFGTAMAAFYLPVTVMCTLYW). The Cytoplasmic portion of the chain corresponds to 210–366 (RIYRETENRA…LVKEKKAART (157 aa)). Disordered regions lie at residues 225-259 (LQGS…PGRC), 273-297 (SWKE…EEPG), and 310-351 (EAQA…QLAK). At threonine 230 the chain carries Phosphothreonine. Residues 238–247 (SSSSERSQPG) show a composition bias toward low complexity. Residues 328–343 (RPTKKGRDRAGKGQKP) show a composition bias toward basic residues. The chain crosses the membrane as a helical span at residues 367–390 (LSAILLAFILTWTPYNIMVLVSTF). At 391-401 (CKDCVPETLWE) the chain is on the extracellular side. The chain crosses the membrane as a helical span at residues 402 to 420 (LGYWLCYVNSTINPMCYAL). Topologically, residues 421 to 460 (CNKAFRDTFRLLLLCRWDKRRWRKIPKRPGSVHRTPSRQC) are cytoplasmic. Threonine 428 carries the phosphothreonine modification. At serine 451 the chain carries Phosphoserine. Residue threonine 455 is modified to Phosphothreonine. Serine 457 is modified (phosphoserine).

It belongs to the G-protein coupled receptor 1 family. Muscarinic acetylcholine receptor subfamily. CHRM1 sub-subfamily. In terms of assembly, interacts with GPRASP2. Interacts with TMEM147.

It localises to the cell membrane. Its subcellular location is the postsynaptic cell membrane. In terms of biological role, the muscarinic acetylcholine receptor mediates various cellular responses, including inhibition of adenylate cyclase, breakdown of phosphoinositides and modulation of potassium channels through the action of G proteins. Primary transducing effect is Pi turnover. The chain is Muscarinic acetylcholine receptor M1 (CHRM1) from Macaca mulatta (Rhesus macaque).